The sequence spans 217 residues: Somatotropin (217 aa).

The N-terminal stretch at 1–26 (MMAAGPRTSLLLAFALLCLPWTQVVG) is a signal peptide. His-46 is a binding site for Zn(2+). Cys-79 and Cys-190 are joined by a disulfide. The residue at position 132 (Ser-132) is a Phosphoserine. Glu-199 lines the Zn(2+) pocket. An intrachain disulfide couples Cys-207 to Cys-215.

The protein belongs to the somatotropin/prolactin family.

It localises to the secreted. Plays an important role in growth control. Its major role in stimulating body growth is to stimulate the liver and other tissues to secrete IGF1. It stimulates both the differentiation and proliferation of myoblasts. It also stimulates amino acid uptake and protein synthesis in muscle and other tissues. The sequence is that of Somatotropin (GH1) from Bos taurus (Bovine).